We begin with the raw amino-acid sequence, 361 residues long: D-amino-acid oxidase (361 aa).

The N-terminal stretch at 1–22 is a signal peptide; that stretch reads MSNTIVVVGAGVIGLTSALLLS. The FAD site is built by alanine 10, isoleucine 13, lysine 34, histidine 35, alanine 45, serine 46, glycine 50, and asparagine 52. N-linked (GlcNAc...) asparagine glycosylation is found at asparagine 193 and asparagine 222. Residues tyrosine 242, tyrosine 258, and arginine 305 each contribute to the (R)-lactate site. Positions 242, 258, and 305 each coordinate anthranilate. FAD contacts are provided by arginine 305, serine 332, glycine 335, tyrosine 336, and glutamine 337. The short motif at 359-361 is the Microbody targeting signal element; it reads SKL.

Belongs to the DAMOX/DASOX family. The cofactor is FAD. In terms of processing, the N-terminus is blocked.

The protein resides in the peroxisome matrix. It carries out the reaction a D-alpha-amino acid + O2 + H2O = a 2-oxocarboxylate + H2O2 + NH4(+). Its function is as follows. Catalyzes the oxidative deamination of D-amino acids with broad substrate specificity. Enables the organism to utilize D-amino acids as a source of nutrients. This is D-amino-acid oxidase from Fusarium vanettenii (Neocosmospora pisi).